Consider the following 64-residue polypeptide: Large ribosomal subunit protein bL28 (64 aa).

It belongs to the bacterial ribosomal protein bL28 family.

The polypeptide is Large ribosomal subunit protein bL28 (Campylobacter jejuni subsp. doylei (strain ATCC BAA-1458 / RM4099 / 269.97)).